The sequence spans 423 residues: 3-isopropylmalate dehydratase large subunit 1 (423 aa).

The [4Fe-4S] cluster site is built by Cys-302, Cys-362, and Cys-365.

Belongs to the aconitase/IPM isomerase family. LeuC type 2 subfamily. As to quaternary structure, heterodimer of LeuC and LeuD. Requires [4Fe-4S] cluster as cofactor.

The enzyme catalyses (2R,3S)-3-isopropylmalate = (2S)-2-isopropylmalate. It functions in the pathway amino-acid biosynthesis; L-leucine biosynthesis; L-leucine from 3-methyl-2-oxobutanoate: step 2/4. Functionally, catalyzes the isomerization between 2-isopropylmalate and 3-isopropylmalate, via the formation of 2-isopropylmaleate. This chain is 3-isopropylmalate dehydratase large subunit 1, found in Pyrococcus abyssi (strain GE5 / Orsay).